Here is a 35-residue protein sequence, read N- to C-terminus: MVEVLLTGIVLGSIFITLLGLLAAAKLQYNRKKTN.

Residues 5 to 25 (LLTGIVLGSIFITLLGLLAAA) traverse the membrane as a helical segment.

It belongs to the PetG family. As to quaternary structure, the 4 large subunits of the cytochrome b6-f complex are cytochrome b6, subunit IV (17 kDa polypeptide, PetD), cytochrome f and the Rieske protein, while the 4 small subunits are PetG, PetL, PetM and PetN. The complex functions as a dimer.

The protein resides in the plastid. Its subcellular location is the chloroplast thylakoid membrane. Its function is as follows. Component of the cytochrome b6-f complex, which mediates electron transfer between photosystem II (PSII) and photosystem I (PSI), cyclic electron flow around PSI, and state transitions. PetG is required for either the stability or assembly of the cytochrome b6-f complex. The sequence is that of Cytochrome b6-f complex subunit 5 from Cyanidium caldarium (Red alga).